The chain runs to 106 residues: ATP-dependent Clp protease adapter protein ClpS (106 aa).

Belongs to the ClpS family. Binds to the N-terminal domain of the chaperone ClpA.

Functionally, involved in the modulation of the specificity of the ClpAP-mediated ATP-dependent protein degradation. The protein is ATP-dependent Clp protease adapter protein ClpS of Aliivibrio fischeri (strain ATCC 700601 / ES114) (Vibrio fischeri).